The sequence spans 1058 residues: UPF0507 protein YALI0E18612g (1058 aa).

The VPS9 domain maps to 252–394 (TNEDGPLDQA…IGENREQLEA (143 aa)).

This sequence belongs to the UPF0507 family.

The protein is UPF0507 protein YALI0E18612g of Yarrowia lipolytica (strain CLIB 122 / E 150) (Yeast).